The chain runs to 193 residues: MAQSDITIDALSKVGQQDAEYLVSLVRSVPGFPKEGIIFRDFMPVLADPKGLKILLKALEEALPVSPSEFDSIAGLESRGFLFGPAMAAHLGKGFIAVRKAGKLPPETIGESYDLEYGTASVEIETDAVQAGKRVLIVDDLIATGGTAKAATDLIEKAGGTVVGFSFVMRLDGLDGLDKLDGKPSSSLIAMPA.

This sequence belongs to the purine/pyrimidine phosphoribosyltransferase family. As to quaternary structure, homodimer.

The protein localises to the cytoplasm. It catalyses the reaction AMP + diphosphate = 5-phospho-alpha-D-ribose 1-diphosphate + adenine. It functions in the pathway purine metabolism; AMP biosynthesis via salvage pathway; AMP from adenine: step 1/1. Its function is as follows. Catalyzes a salvage reaction resulting in the formation of AMP, that is energically less costly than de novo synthesis. This Bifidobacterium longum (strain DJO10A) protein is Adenine phosphoribosyltransferase.